The chain runs to 143 residues: Ribonuclease P protein component 2 (143 aa).

Belongs to the eukaryotic/archaeal RNase P protein component 2 family. In terms of assembly, consists of a catalytic RNA component and at least 4-5 protein subunits.

Its subcellular location is the cytoplasm. It catalyses the reaction Endonucleolytic cleavage of RNA, removing 5'-extranucleotides from tRNA precursor.. Functionally, part of ribonuclease P, a protein complex that generates mature tRNA molecules by cleaving their 5'-ends. The protein is Ribonuclease P protein component 2 of Saccharolobus islandicus (strain Y.N.15.51 / Yellowstone #2) (Sulfolobus islandicus).